A 265-amino-acid chain; its full sequence is Undecaprenyl-diphosphatase (265 aa).

7 helical membrane passes run E42 to F62, I90 to F110, V115 to I135, V160 to L182, F195 to V215, I222 to V242, and K245 to L265.

Belongs to the UppP family.

The protein resides in the cell membrane. The catalysed reaction is di-trans,octa-cis-undecaprenyl diphosphate + H2O = di-trans,octa-cis-undecaprenyl phosphate + phosphate + H(+). Catalyzes the dephosphorylation of undecaprenyl diphosphate (UPP). The chain is Undecaprenyl-diphosphatase from Methanococcoides burtonii (strain DSM 6242 / NBRC 107633 / OCM 468 / ACE-M).